Reading from the N-terminus, the 91-residue chain is MTIIGSIIKISNPKKFSIGGGSISNNNFISLYSSKKKKCESNSGSGLFGANNLLGGLLGSLGGNNNKQVVYHPAVSATGETIYIHSVCGCE.

It belongs to the hssA/B family.

This Dictyostelium discoideum (Social amoeba) protein is HssA/B-like protein 24 (hssl24).